The sequence spans 173 residues: uncharacterized protein (173 aa).

Positions 80–107 are disordered; that stretch reads HSATVKRTDSSHRLKSHVVDKRPRRSLD. Basic and acidic residues predominate over residues 85–107; it reads KRTDSSHRLKSHVVDKRPRRSLD.

This is an uncharacterized protein from Autographa californica nuclear polyhedrosis virus (AcMNPV).